We begin with the raw amino-acid sequence, 321 residues long: MSSPLLTLNNGLKMPQIGFGCWKVDNATCAETIYEAIKVGYRLFDGAMDYGNEKEVGEGVNKAIKDGLVKREELFIVSKLWNNFHHPDSVKLAIKKVLSDLNLEYIDLFYMHFPIAQKFVPIEKKYPPNFYCGDGDKWSFEDVPLLTTWRAMEELVEEGLVKSIGISNFVGALIQDLLRGCKIRPAVLEIEHHPYLVQPRLIEYAKTEGIHVTAYSSFGPQSFVELDHPKVKDCTTLFKHETITSIASAHDVPPAKVLLRWATQRGLAVIPKSNKKERLLGNLKINDFDLTEAELEKIEALDIGLRFNDPWTWGYNIPTFI.

The Proton donor role is filled by tyrosine 50. Residue histidine 112 coordinates substrate. Residues serine 167–asparagine 168, serine 216–glutamate 225, and lysine 272–asparagine 282 each bind NADP(+).

Belongs to the aldo/keto reductase family.

The catalysed reaction is xylitol + NAD(+) = D-xylose + NADH + H(+). It carries out the reaction xylitol + NADP(+) = D-xylose + NADPH + H(+). It participates in carbohydrate metabolism; D-xylose degradation. Reduces D-xylose into xylitol. Preferentially utilizes NADPH as a cosubstrate. The sequence is that of NADPH-dependent D-xylose reductase (XYL1) from Candida boidinii (Yeast).